Consider the following 151-residue polypeptide: UPF0756 membrane protein Aflv_0503 (151 aa).

4 consecutive transmembrane segments (helical) span residues 4 to 24 (FIFLFILLVIGMMAKNQSLII), 52 to 72 (LGVTIITIAVLVPIATGKIGF), 85 to 105 (WIAMLSGIAVALLAKGGVALL), and 115 to 135 (LVLGTILAVSLFKGVAVGPLI).

The protein belongs to the UPF0756 family.

The protein resides in the cell membrane. The sequence is that of UPF0756 membrane protein Aflv_0503 from Anoxybacillus flavithermus (strain DSM 21510 / WK1).